Reading from the N-terminus, the 85-residue chain is UPF0291 protein SPCG_1462 (85 aa).

The segment at 62–85 (TPEKLRQVQREKGLHGRSLDDPNS) is disordered.

Belongs to the UPF0291 family.

Its subcellular location is the cytoplasm. In Streptococcus pneumoniae (strain CGSP14), this protein is UPF0291 protein SPCG_1462.